Reading from the N-terminus, the 248-residue chain is Pyruvate formate-lyase-activating enzyme (248 aa).

In terms of domain architecture, Radical SAM core spans 17–248; the sequence is VDGPGIRFIV…NKILETSSYK (232 aa). Residues cysteine 31, cysteine 35, and cysteine 38 each coordinate [4Fe-4S] cluster. Residues 37–39, glycine 80, 135–137, and histidine 208 each bind S-adenosyl-L-methionine; these read FCH and DIK.

The protein belongs to the organic radical-activating enzymes family. [4Fe-4S] cluster serves as cofactor.

The protein resides in the cytoplasm. The catalysed reaction is glycyl-[formate C-acetyltransferase] + reduced [flavodoxin] + S-adenosyl-L-methionine = glycin-2-yl radical-[formate C-acetyltransferase] + semiquinone [flavodoxin] + 5'-deoxyadenosine + L-methionine + H(+). In terms of biological role, activation of pyruvate formate-lyase under anaerobic conditions by generation of an organic free radical, using S-adenosylmethionine and reduced flavodoxin as cosubstrates to produce 5'-deoxy-adenosine. The chain is Pyruvate formate-lyase-activating enzyme (pflA) from Listeria innocua serovar 6a (strain ATCC BAA-680 / CLIP 11262).